Consider the following 118-residue polypeptide: Ribonuclease P protein component 4 (118 aa).

Cys-59, Cys-62, Cys-85, and Cys-88 together coordinate Zn(2+).

It belongs to the eukaryotic/archaeal RNase P protein component 4 family. Consists of a catalytic RNA component and at least 4-5 protein subunits. Zn(2+) is required as a cofactor.

Its subcellular location is the cytoplasm. It catalyses the reaction Endonucleolytic cleavage of RNA, removing 5'-extranucleotides from tRNA precursor.. In terms of biological role, part of ribonuclease P, a protein complex that generates mature tRNA molecules by cleaving their 5'-ends. The chain is Ribonuclease P protein component 4 from Sulfolobus acidocaldarius (strain ATCC 33909 / DSM 639 / JCM 8929 / NBRC 15157 / NCIMB 11770).